We begin with the raw amino-acid sequence, 506 residues long: Kynurenine 3-monooxygenase (506 aa).

It belongs to the aromatic-ring hydroxylase family. KMO subfamily. FAD is required as a cofactor.

It is found in the mitochondrion outer membrane. It carries out the reaction L-kynurenine + NADPH + O2 + H(+) = 3-hydroxy-L-kynurenine + NADP(+) + H2O. It functions in the pathway cofactor biosynthesis; NAD(+) biosynthesis; quinolinate from L-kynurenine: step 1/3. Catalyzes the hydroxylation of L-kynurenine (L-Kyn) to form 3-hydroxy-L-kynurenine (L-3OHKyn). Required for synthesis of quinolinic acid. In Emericella nidulans (strain FGSC A4 / ATCC 38163 / CBS 112.46 / NRRL 194 / M139) (Aspergillus nidulans), this protein is Kynurenine 3-monooxygenase (bna4).